Reading from the N-terminus, the 332-residue chain is Glycerol-3-phosphate dehydrogenase [NAD(P)+] (332 aa).

Residues W11, R30, and K108 each contribute to the NADPH site. Sn-glycerol 3-phosphate is bound by residues K108, G137, and S139. A141 is a binding site for NADPH. The sn-glycerol 3-phosphate site is built by K192, D245, S255, R256, and N257. Residue K192 is the Proton acceptor of the active site. Residue R256 participates in NADPH binding. Residues V280 and E282 each coordinate NADPH.

It belongs to the NAD-dependent glycerol-3-phosphate dehydrogenase family.

It localises to the cytoplasm. It carries out the reaction sn-glycerol 3-phosphate + NAD(+) = dihydroxyacetone phosphate + NADH + H(+). It catalyses the reaction sn-glycerol 3-phosphate + NADP(+) = dihydroxyacetone phosphate + NADPH + H(+). Its pathway is membrane lipid metabolism; glycerophospholipid metabolism. Its function is as follows. Catalyzes the reduction of the glycolytic intermediate dihydroxyacetone phosphate (DHAP) to sn-glycerol 3-phosphate (G3P), the key precursor for phospholipid synthesis. This Burkholderia mallei (strain ATCC 23344) protein is Glycerol-3-phosphate dehydrogenase [NAD(P)+].